Reading from the N-terminus, the 572-residue chain is NADP-dependent malic enzyme (572 aa).

Methionine 1 is modified (N-acetylmethionine). The active-site Proton donor is the tyrosine 102. Arginine 155 lines the NADP(+) pocket. Lysine 173 functions as the Proton acceptor in the catalytic mechanism. Residues glutamate 245, aspartate 246, and aspartate 269 each contribute to the a divalent metal cation site. Residues aspartate 269 and 301-318 contribute to the NADP(+) site; that span reads GAGE…MAME. Phosphoserine is present on serine 336.

The protein belongs to the malic enzymes family. Homotetramer. Mg(2+) serves as cofactor. It depends on Mn(2+) as a cofactor.

Its subcellular location is the cytoplasm. It carries out the reaction (S)-malate + NADP(+) = pyruvate + CO2 + NADPH. The catalysed reaction is oxaloacetate + H(+) = pyruvate + CO2. Functionally, catalyzes the oxidative decarboxylation of (S)-malate in the presence of NADP(+) and divalent metal ions, and decarboxylation of oxaloacetate. The sequence is that of NADP-dependent malic enzyme (Me1) from Mus musculus (Mouse).